The primary structure comprises 592 residues: Potassium-transporting ATPase potassium-binding subunit (592 aa).

11 consecutive transmembrane segments (helical) span residues 7–27 (LQTV…GTFM), 71–91 (VLFN…QHLL), 136–156 (GLTV…IAVI), 179–199 (LYIL…QGVI), 287–307 (LEIL…GAMV), 314–334 (WTLL…LQGV), 411–431 (GLYT…LMIG), 449–469 (SVVT…IAMI), 473–493 (AVAA…YAFA), 515–535 (ILGA…VLAM), and 559–579 (FALW…FPAL).

It belongs to the KdpA family. The system is composed of three essential subunits: KdpA, KdpB and KdpC.

The protein resides in the cell inner membrane. Part of the high-affinity ATP-driven potassium transport (or Kdp) system, which catalyzes the hydrolysis of ATP coupled with the electrogenic transport of potassium into the cytoplasm. This subunit binds the periplasmic potassium ions and delivers the ions to the membrane domain of KdpB through an intramembrane tunnel. This is Potassium-transporting ATPase potassium-binding subunit from Geobacter sulfurreducens (strain ATCC 51573 / DSM 12127 / PCA).